Here is a 487-residue protein sequence, read N- to C-terminus: Mu-like prophage FluMu tail sheath protein (487 aa).

It belongs to the myoviridae tail sheath protein family.

Major component of the tail. The protein is Mu-like prophage FluMu tail sheath protein of Haemophilus influenzae (strain ATCC 51907 / DSM 11121 / KW20 / Rd).